Reading from the N-terminus, the 177-residue chain is Inner membrane protein p22 (177 aa).

At 1-7 (MFNIKMT) the chain is on the intravirion side. The chain crosses the membrane as a helical span at residues 8–28 (ISTLLIALIILVIIILVVFLY). Residues 29 to 177 (YKKQQPPKKV…IALPRNHKHA (149 aa)) are Virion surface-facing.

It belongs to the asfivirus inner membrane protein p22 family.

The protein resides in the virion membrane. It is found in the host cell membrane. This is Inner membrane protein p22 from Ornithodoros (relapsing fever ticks).